The chain runs to 161 residues: MKYDTSELCDIYQEDVNVVEPLFSNFGGRASFGGQIITVKCFEDNGLLYDLLEQNGRGRVLVVDGGGSVRRALVDAELTRLAVQNEWEGLVIYGAVRQVDDLEELDIGIQAMAAIPVGAAGEGIGESDVRVNFGGVTFFSGDHLYADNTGIILSEDPLDIE.

This sequence belongs to the RraA family. Homotrimer. Binds to both RNA-binding sites in the C-terminal region of Rne and to RhlB.

The protein localises to the cytoplasm. In terms of biological role, globally modulates RNA abundance by binding to RNase E (Rne) and regulating its endonucleolytic activity. Can modulate Rne action in a substrate-dependent manner by altering the composition of the degradosome. Modulates RNA-binding and helicase activities of the degradosome. The polypeptide is Regulator of ribonuclease activity A (Escherichia fergusonii (strain ATCC 35469 / DSM 13698 / CCUG 18766 / IAM 14443 / JCM 21226 / LMG 7866 / NBRC 102419 / NCTC 12128 / CDC 0568-73)).